The following is a 338-amino-acid chain: Serpentine receptor class alpha-31 (338 aa).

A run of 7 helical transmembrane segments spans residues 23-43 (GNHC…VFAI), 59-79 (LLFS…GIRI), 108-125 (LYYY…SLFF), 142-162 (FSKI…YWIF), 188-208 (VNEF…VIFF), 240-260 (VCII…TTEI), and 276-296 (SIAF…IIIY).

The protein belongs to the nematode receptor-like protein sra family.

It localises to the membrane. In Caenorhabditis elegans, this protein is Serpentine receptor class alpha-31 (sra-31).